A 363-amino-acid chain; its full sequence is uncharacterized protein (363 aa).

Residue 29-36 participates in ATP binding; the sequence is GSINSGKT.

The protein belongs to the archaeal ATPase family.

This is an uncharacterized protein from Methanocaldococcus jannaschii (strain ATCC 43067 / DSM 2661 / JAL-1 / JCM 10045 / NBRC 100440) (Methanococcus jannaschii).